The primary structure comprises 329 residues: CDP-6-deoxy-L-threo-D-glycero-4-hexulose-3-dehydrase reductase (329 aa).

Positions 2–93 (SLNVKLHPSG…ELDVNYYPEL (92 aa)) constitute a 2Fe-2S ferredoxin-type domain. 4 residues coordinate [2Fe-2S] cluster: C37, C42, C45, and C75. Residues 98 to 197 (KKTYPCKLDS…EGPQGTFFVR (100 aa)) form the FAD-binding FR-type domain.

As to quaternary structure, monomer.

The protein operates within nucleotide-sugar biosynthesis; CDP-ascarylose biosynthesis. It functions in the pathway bacterial outer membrane biogenesis; lipopolysaccharide biosynthesis. Its function is as follows. Participates in the conversion of CDP-6-deoxy-D-glycero-L-threo-4-hexulose to 3,6-dideoxy-D-glycero-D-glycero-4-hexulose together with CDP-6-deoxy-D-glycero-L-threo-4-hexulose-3-dehydrase (E1) in two consecutive steps. The detailed mechanism of E3 is not yet resolved. In Yersinia pseudotuberculosis serotype I (strain IP32953), this protein is CDP-6-deoxy-L-threo-D-glycero-4-hexulose-3-dehydrase reductase (ascD).